The following is a 545-amino-acid chain: ATP synthase subunit alpha (545 aa).

Residue 174 to 181 (GDRKTGKT) coordinates ATP.

This sequence belongs to the ATPase alpha/beta chains family. As to quaternary structure, F-type ATPases have 2 components, CF(1) - the catalytic core - and CF(0) - the membrane proton channel. CF(1) has five subunits: alpha(3), beta(3), gamma(1), delta(1), epsilon(1). CF(0) has three main subunits: a(1), b(2) and c(9-12). The alpha and beta chains form an alternating ring which encloses part of the gamma chain. CF(1) is attached to CF(0) by a central stalk formed by the gamma and epsilon chains, while a peripheral stalk is formed by the delta and b chains.

Its subcellular location is the cell membrane. The enzyme catalyses ATP + H2O + 4 H(+)(in) = ADP + phosphate + 5 H(+)(out). In terms of biological role, produces ATP from ADP in the presence of a proton gradient across the membrane. The alpha chain is a regulatory subunit. In Cutibacterium acnes (strain DSM 16379 / KPA171202) (Propionibacterium acnes), this protein is ATP synthase subunit alpha.